The chain runs to 121 residues: ATP synthase epsilon chain (121 aa).

The protein belongs to the ATPase epsilon chain family. In terms of assembly, F-type ATPases have 2 components, CF(1) - the catalytic core - and CF(0) - the membrane proton channel. CF(1) has five subunits: alpha(3), beta(3), gamma(1), delta(1), epsilon(1). CF(0) has three main subunits: a, b and c.

The protein localises to the cell membrane. In terms of biological role, produces ATP from ADP in the presence of a proton gradient across the membrane. The sequence is that of ATP synthase epsilon chain from Mycobacterium avium (strain 104).